Here is a 235-residue protein sequence, read N- to C-terminus: Flavonoid 3',5'-methyltransferase (235 aa).

S-adenosyl-L-methionine-binding positions include V51, E73, 75–76 (GV), S81, D99, and A128. Residue D151 coordinates a divalent metal cation. D153 contributes to the S-adenosyl-L-methionine binding site. A divalent metal cation-binding residues include D177 and N178.

The protein belongs to the class I-like SAM-binding methyltransferase superfamily. Cation-dependent O-methyltransferase family. CCoAMT subfamily. Requires a divalent metal cation as cofactor.

It is found in the cytoplasm. It carries out the reaction S-adenosyl-L-methionine + a 3'-hydroxyflavonoid = S-adenosyl-L-homocysteine + a 3'-methoxyflavonoid.. The catalysed reaction is S-adenosyl-L-methionine + a 5'-hydroxy-3'-methoxyflavonoid = S-adenosyl-L-homocysteine + a 3',5'-dimethoxyflavonoid.. Its pathway is pigment biosynthesis; anthocyanin biosynthesis. Its function is as follows. Mediates O-methylation of anthocyanins. Anthocyanins are major pigments in grapes: at ripening initiation in red grapevine berries, the exocarp turns color from green to red and then to purple due to the accumulation and extent of methylation of anthocyanins. Catalyzes both 3' and 5' O-methylation of anthocyanins, with a preference for glycosylated substrates. Active on both anthocyanins and flavonols in vitro. Most active with delphinidin 3-glucoside but also acts on cyanidin 3-glucoside, cyanidin, myricetin, quercetin and quercetin 3-glucoside. Not able to methylate flavan type skeletons with chiral centers, such as catechins or dihydroquercetin. The protein is Flavonoid 3',5'-methyltransferase (FAOMT) of Vitis vinifera (Grape).